The following is a 203-amino-acid chain: Glycerol-3-phosphate acyltransferase (203 aa).

Helical transmembrane passes span 4–24, 56–76, 80–100, 115–135, and 149–169; these read IAYLLILGAYLLGSISSAVIF, LGVLMADILKGMLPVSLGFYL, ISVIGFIALAACLGHIFPVFF, IIPMGYSVAGLAVGTWLFVFL, and LIVPLYIWWFSSELTFPVALV.

Belongs to the PlsY family. As to quaternary structure, probably interacts with PlsX.

The protein localises to the cell inner membrane. It carries out the reaction an acyl phosphate + sn-glycerol 3-phosphate = a 1-acyl-sn-glycero-3-phosphate + phosphate. It participates in lipid metabolism; phospholipid metabolism. Functionally, catalyzes the transfer of an acyl group from acyl-phosphate (acyl-PO(4)) to glycerol-3-phosphate (G3P) to form lysophosphatidic acid (LPA). This enzyme utilizes acyl-phosphate as fatty acyl donor, but not acyl-CoA or acyl-ACP. The protein is Glycerol-3-phosphate acyltransferase of Glaesserella parasuis serovar 5 (strain SH0165) (Haemophilus parasuis).